Consider the following 482-residue polypeptide: MVQIVPHVANAHMVKTSRKGLLALVVVGVEECCPTRRCDLRDPNLVVDSNCLLSRSTHQSSLVEDSIIINHFRILNFNNRASIFLCLRIGVICSTQSKMYGGKSYILKGSVSLSLIILILLVTTLLVSAKNQPRISLIEVKTCNLAKGEWVEDKKRPLYSGFECKQWLSNIFSCRVMGRPDFSFEGYRWQPEGCNIPEFNRVNFLRRMQNKTIAFIGDSLGREQFQSLMCMATGGKESPEVQNVGSEYGLVIPKGAPRPGGWAYRFPTTNTTVLSYWSASLTDLVPMNNTDPPHLIAMHLDRPPAFIRNYLHRFHVLVLNTGHHWSRDKIEKNHWVMHVNGTRVEGGYFKNVENAKIFTIHSLVKWLDAQLPLHPRLKAFFTTISPRHEKCNNTIPLSRGSKITGEGGSLDTIVESAVNGTRVKILDITALSKLRDEAHIAGCKLKPKKASNVTSAPTFNDCLHWCLPGIPDTWNELLIAQL.

The chain crosses the membrane as a helical; Signal-anchor for type II membrane protein span at residues 109 to 129 (GSVSLSLIILILLVTTLLVSA). The GDS motif signature appears at 217-219 (GDS). The short motif at 461–475 (DCLHWCLPGIPDTWN) is the DCXHWCLPGXXDXWN motif element.

This sequence belongs to the PC-esterase family. TBL subfamily.

The protein localises to the membrane. Functionally, may act as a bridging protein that binds pectin and other cell wall polysaccharides. Probably involved in maintaining esterification of pectins. May be involved in the specific O-acetylation of cell wall polymers. This Arabidopsis thaliana (Mouse-ear cress) protein is Protein trichome birefringence-like 15 (TBL15).